Consider the following 310-residue polypeptide: ADP-L-glycero-D-manno-heptose-6-epimerase (310 aa).

Residues 10 to 11 (FI), 31 to 32 (DN), Lys-38, Lys-53, 75 to 79 (EGACS), and Asn-92 each bind NADP(+). Tyr-140 serves as the catalytic Proton acceptor. Lys-144 contacts NADP(+). A substrate-binding site is contributed by Asn-169. NADP(+) contacts are provided by Val-170 and Lys-178. Lys-178 functions as the Proton acceptor in the catalytic mechanism. Residues Ser-180, His-187, 201–204 (FEGS), and Arg-209 contribute to the substrate site. Lys-267 bears the N6-acetyllysine mark. Residue Tyr-272 participates in substrate binding.

Belongs to the NAD(P)-dependent epimerase/dehydratase family. HldD subfamily. Homopentamer. NADP(+) is required as a cofactor.

The catalysed reaction is ADP-D-glycero-beta-D-manno-heptose = ADP-L-glycero-beta-D-manno-heptose. Its pathway is nucleotide-sugar biosynthesis; ADP-L-glycero-beta-D-manno-heptose biosynthesis; ADP-L-glycero-beta-D-manno-heptose from D-glycero-beta-D-manno-heptose 7-phosphate: step 4/4. Catalyzes the interconversion between ADP-D-glycero-beta-D-manno-heptose and ADP-L-glycero-beta-D-manno-heptose via an epimerization at carbon 6 of the heptose. This chain is ADP-L-glycero-D-manno-heptose-6-epimerase, found in Shigella boydii serotype 18 (strain CDC 3083-94 / BS512).